The sequence spans 741 residues: MRNFRRFTIALLVLFLGPIGAADTKETPGMDRQNTSNQFWWPERLDLAPLRQHGSESNPLGRQFHYAKEFKELDIQTLKEEIKTVMKTSQDWWPADYGHYGPFFIRMAWHSAGTYRISDGRGGAGGGQQRFEPLNSWPDNANLDKARRLLWPIKKKYGKKISWADLMVLTGNVALESMGFKTYGFAGGRTDDWEADLVYWGPEKKFLEDQRYKGNRELKNPLAAVQMGLIYVNPEGPNGNPDPLAAAKDIRETFGRMAMNDEETVALIAGGHTFGKAHGKSDPSKHVGKEPAAAGLEEQGFGWKNNYKKGNAEDTITSGLEGAWTANPTKWTTQYLNNLFGFEWVQTKSPAGAIQWVPKDGAGANMVPDAHDKSLRHAPIMFTTDLALKFDPSYKVIAKRFQENPKEFELAFAKAWFKLTHRDMGPLTRYIGKDLPKEPLIWQDPVPAVNHKLVGPKEIESLKGKILKSGLSVPQLVRTAWASAASFRSTDMRGGANGARIRLSPQKNWPVNDPDELSKVLKKLEQIQEEFNKSGNKISLADLIVLAGNAAIEEAAKKAGVKVTVPFTPGRTDATIEQTDEYSFSVLEPKADAFRNYYGPGNLMSPTEMLVDRANMLSLSIPEMTVLLGGMRSLDANAGKSKHGILTTKPGVLSNDFFVNLLDMSTKWQKSEQTEGLYEGLDRKTGSKRWTATSVDLIFGSHSELRAVAEVYASDDAKEKFVKDFVSAWNKVMMLDRFDVK.

The signal sequence occupies residues 1–21 (MRNFRRFTIALLVLFLGPIGA). A cross-link (tryptophyl-tyrosyl-methioninium (Trp-Tyr) (with M-257)) is located at residues 109–231 (WHSAGTYRIS…LAAVQMGLIY (123 aa)). His110 serves as the catalytic Proton acceptor. The segment at residues 231 to 257 (YVNPEGPNGNPDPLAAAKDIRETFGRM) is a cross-link (tryptophyl-tyrosyl-methioninium (Tyr-Met) (with W-109)). His272 contributes to the heme b binding site.

It belongs to the peroxidase family. Peroxidase/catalase subfamily. As to quaternary structure, homodimer or homotetramer. Heme b serves as cofactor. In terms of processing, formation of the three residue Trp-Tyr-Met cross-link is important for the catalase, but not the peroxidase activity of the enzyme.

It catalyses the reaction H2O2 + AH2 = A + 2 H2O. The catalysed reaction is 2 H2O2 = O2 + 2 H2O. Functionally, bifunctional enzyme with both catalase and broad-spectrum peroxidase activity. This Leptospira biflexa serovar Patoc (strain Patoc 1 / Ames) protein is Catalase-peroxidase.